The primary structure comprises 334 residues: Aspartate carbamoyltransferase catalytic subunit (334 aa).

Carbamoyl phosphate contacts are provided by R71 and T72. An L-aspartate-binding site is contributed by K99. Residues R121, H151, and Q154 each contribute to the carbamoyl phosphate site. Positions 184 and 239 each coordinate L-aspartate. Carbamoyl phosphate contacts are provided by G280 and P281.

The protein belongs to the aspartate/ornithine carbamoyltransferase superfamily. ATCase family. As to quaternary structure, heterododecamer (2C3:3R2) of six catalytic PyrB chains organized as two trimers (C3), and six regulatory PyrI chains organized as three dimers (R2).

The enzyme catalyses carbamoyl phosphate + L-aspartate = N-carbamoyl-L-aspartate + phosphate + H(+). It participates in pyrimidine metabolism; UMP biosynthesis via de novo pathway; (S)-dihydroorotate from bicarbonate: step 2/3. Catalyzes the condensation of carbamoyl phosphate and aspartate to form carbamoyl aspartate and inorganic phosphate, the committed step in the de novo pyrimidine nucleotide biosynthesis pathway. This chain is Aspartate carbamoyltransferase catalytic subunit, found in Pseudomonas syringae pv. syringae (strain B728a).